The chain runs to 409 residues: MDNLVERFLRYVSFETQSNSSVTQCPSTSGQIVLAEQLKNELIELELVDVELDENGYVMARLPSNVEHDVPAIGLIAHMDTAPDASGKDVVPQIVENYQGGDIALGIGDEVLSPIQYPDLRKLLGHNIITTDGTTLLGADNKAGIAEIITAIAHLKANPDIKHGDICIGFTPDEEIGRGANLFNVEKFGAKWAYTIDGGPVGELEFENFNATSADVICHGVNVHPGTAKNKMINSMNIAAQFQLMMPTEETPECTEHYEGFYHLKSMEPSVAKTELGYIIRDFDRKGLEQRKVFMQSKVDELNSSLTKGRVELILTDCYFNMREMVEPHQHIIELAKEAMIACDVKPDIKPIRGGTDGARLSFMGLPCPNIFTGGYNFHGIHEFITIEGMEQAVRVIVKLAEKTSEKYQ.

Residue histidine 78 coordinates Zn(2+). Aspartate 80 is an active-site residue. Zn(2+) is bound at residue aspartate 140. The active-site Proton acceptor is the glutamate 174. Residues glutamate 175, aspartate 197, and histidine 379 each coordinate Zn(2+).

The protein belongs to the peptidase M20B family. Zn(2+) is required as a cofactor.

The protein localises to the cytoplasm. It catalyses the reaction Release of the N-terminal residue from a tripeptide.. In terms of biological role, cleaves the N-terminal amino acid of tripeptides. This Photobacterium profundum (strain SS9) protein is Peptidase T.